A 432-amino-acid chain; its full sequence is 3-phosphoshikimate 1-carboxyvinyltransferase (432 aa).

3-phosphoshikimate contacts are provided by K22, S23, and R27. K22 contributes to the phosphoenolpyruvate binding site. Residues G96 and R127 each contribute to the phosphoenolpyruvate site. 3-phosphoshikimate-binding residues include S173, S174, Q175, S201, D316, N339, and K343. Position 175 (Q175) interacts with phosphoenolpyruvate. D316 (proton acceptor) is an active-site residue. Residues R347, R391, and K416 each contribute to the phosphoenolpyruvate site.

This sequence belongs to the EPSP synthase family. As to quaternary structure, monomer.

The protein localises to the cytoplasm. It carries out the reaction 3-phosphoshikimate + phosphoenolpyruvate = 5-O-(1-carboxyvinyl)-3-phosphoshikimate + phosphate. It functions in the pathway metabolic intermediate biosynthesis; chorismate biosynthesis; chorismate from D-erythrose 4-phosphate and phosphoenolpyruvate: step 6/7. Catalyzes the transfer of the enolpyruvyl moiety of phosphoenolpyruvate (PEP) to the 5-hydroxyl of shikimate-3-phosphate (S3P) to produce enolpyruvyl shikimate-3-phosphate and inorganic phosphate. The chain is 3-phosphoshikimate 1-carboxyvinyltransferase from Actinobacillus pleuropneumoniae serotype 5b (strain L20).